Here is a 254-residue protein sequence, read N- to C-terminus: MTILPISAFSDNYIWTFIDKIAGVLDCVDPGEAGPIIRFAQSNQLTLRTILLTHHHYDHIGGVDLLIKQWPSCKVYGPIDERINNVTHPIKQGQSVQVGSLHFHILFNPGHTSTHISYYEPQQGWLFCGDTLFSAGCGRVFDGTIEELHESLLLFKKLPRNTKVFCAHEYTLQNLKFAHTVEPCNSSVINYMQQILKQPSPCTLPSNIDLELSINPFLRTDKEQVKQYALSHGANSSDSLDVFKVLRNQKNSFK.

His54, His56, Asp58, His59, His111, Asp130, and His168 together coordinate Zn(2+).

The protein belongs to the metallo-beta-lactamase superfamily. Glyoxalase II family. In terms of assembly, monomer. Zn(2+) serves as cofactor.

The enzyme catalyses an S-(2-hydroxyacyl)glutathione + H2O = a 2-hydroxy carboxylate + glutathione + H(+). It participates in secondary metabolite metabolism; methylglyoxal degradation; (R)-lactate from methylglyoxal: step 2/2. Its function is as follows. Thiolesterase that catalyzes the hydrolysis of S-D-lactoyl-glutathione to form glutathione and D-lactic acid. This chain is Hydroxyacylglutathione hydrolase, found in Legionella pneumophila (strain Paris).